A 66-amino-acid chain; its full sequence is Large ribosomal subunit protein bL32 (66 aa).

This sequence belongs to the bacterial ribosomal protein bL32 family.

The protein is Large ribosomal subunit protein bL32 of Rickettsia canadensis (strain McKiel).